The sequence spans 889 residues: Rho GTPase-activating protein 27 (889 aa).

The region spanning 6-69 is the SH3 domain; the sequence is VGDVYVLVEH…PAQYVRELPA (64 aa). Positions 104 to 132 are disordered; the sequence is AGPDGAPEESGGRASSLCGPAQRGAATQR. 3 positions are modified to phosphoserine: Ser156, Ser216, and Ser249. 2 consecutive WW domains span residues 246–280 and 299–333; these read PLPSPVWETHTDAGTGRPYYYNPDTGVTTWESPFE and VSLETEWGQYWDEESRRVFFYNPLTGETAWEDEAE. Positions 329 to 341 are enriched in acidic residues; sequence EDEAENEPEEELE. The interval 329–397 is disordered; that stretch reads EDEAENEPEE…SPLTTPPGWS (69 aa). Phosphoserine is present on Ser347. The segment covering 383-395 has biased composition (low complexity); the sequence is EPGPTSPLTTPPG. One can recognise a WW 3 domain in the interval 411–444; it reads HFTQEQWVRLEDPHGKPYFYNPEDSSVRWELPQV. The segment at 447-474 is disordered; it reads PAPRSIHKSSQDGDTPAQASPPEEKVPA. The residue at position 456 (Ser456) is a Phosphoserine. Thr461 is modified (phosphothreonine). Ser466 is modified (phosphoserine). Residues 496 to 612 form the PH domain; the sequence is TLDKAGVLHR…WHKAIAQGIQ (117 aa). The tract at residues 617–655 is disordered; it reads ELPPEESESSRVDFGSSERLGSWQEKEEDARPNAAAPAL. In terms of domain architecture, Rho-GAP spans 697–886; that stretch reads CALAALCERE…LILQQCADIF (190 aa).

In terms of assembly, interacts with SH3KBP1/CIN85. As to expression, expressed in germinal center B-cell, spleen, chronic lymphocytic leukemia, pancreatic cancer and lung cancer.

It is found in the cytoplasm. It localises to the membrane. Rho GTPase-activating protein which may be involved in clathrin-mediated endocytosis. GTPase activators for the Rho-type GTPases act by converting them to an inactive GDP-bound state. Has activity toward CDC42 and RAC1. This is Rho GTPase-activating protein 27 from Homo sapiens (Human).